The sequence spans 652 residues: ATP-dependent zinc metalloprotease FtsH (652 aa).

Residues 1–11 (MKKQNNGLIKN) are Cytoplasmic-facing. The chain crosses the membrane as a helical span at residues 12 to 32 (PFLWLLFIFFLVTGFQYFYSG). Residues 33–131 (NNSGGSQQIN…EVTVKHESSS (99 aa)) are Extracellular-facing. A helical membrane pass occupies residues 132–152 (GIWINLLVSIVPFGILFFFLF). Residues 153-652 (SMMGNMGGGN…EVKSKMNDEK (500 aa)) are Cytoplasmic-facing. Residue 227 to 234 (GPPGTGKT) coordinates ATP. His449 is a binding site for Zn(2+). Glu450 is a catalytic residue. Zn(2+)-binding residues include His453 and Asp525. A disordered region spans residues 628–652 (MPEAVEEESHALSYDEVKSKMNDEK). Residues 634 to 652 (EESHALSYDEVKSKMNDEK) show a composition bias toward basic and acidic residues.

The protein in the central section; belongs to the AAA ATPase family. This sequence in the C-terminal section; belongs to the peptidase M41 family. In terms of assembly, homohexamer. Requires Zn(2+) as cofactor.

The protein localises to the cell membrane. In terms of biological role, acts as a processive, ATP-dependent zinc metallopeptidase for both cytoplasmic and membrane proteins. Plays a role in the quality control of integral membrane proteins. In Streptococcus pneumoniae (strain ATCC BAA-255 / R6), this protein is ATP-dependent zinc metalloprotease FtsH.